The following is a 325-amino-acid chain: Adenine deaminase (325 aa).

Zn(2+) contacts are provided by His-11, His-13, and His-189. Glu-192 (proton donor) is an active-site residue. Asp-270 is a binding site for Zn(2+). Asp-271 contacts substrate.

Belongs to the metallo-dependent hydrolases superfamily. Adenosine and AMP deaminases family. Adenine deaminase type 2 subfamily. Zn(2+) serves as cofactor.

It carries out the reaction adenine + H2O + H(+) = hypoxanthine + NH4(+). In terms of biological role, catalyzes the hydrolytic deamination of adenine to hypoxanthine. Plays an important role in the purine salvage pathway and in nitrogen catabolism. The polypeptide is Adenine deaminase (Agrobacterium fabrum (strain C58 / ATCC 33970) (Agrobacterium tumefaciens (strain C58))).